The primary structure comprises 186 residues: Trafficking protein particle complex subunit 3 (186 aa).

This sequence belongs to the TRAPP small subunits family. BET3 subfamily. Homodimer. Part of the multisubunit TRAPP (transport protein particle) complex.

The protein localises to the golgi apparatus. It is found in the cis-Golgi network. It localises to the endoplasmic reticulum. In terms of biological role, may play a role in vesicular transport from endoplasmic reticulum to Golgi. This Dictyostelium discoideum (Social amoeba) protein is Trafficking protein particle complex subunit 3 (trappc3).